Consider the following 236-residue polypeptide: Purine nucleoside phosphorylase DeoD-type (236 aa).

Residue His5 participates in a purine D-ribonucleoside binding. Residues Gly21, Arg25, Arg44, and 88-91 (RVGT) contribute to the phosphate site. Residues 180–182 (DME) and 204–205 (SD) each bind a purine D-ribonucleoside. Asp205 acts as the Proton donor in catalysis.

Belongs to the PNP/UDP phosphorylase family. As to quaternary structure, homohexamer; trimer of homodimers.

It carries out the reaction a purine D-ribonucleoside + phosphate = a purine nucleobase + alpha-D-ribose 1-phosphate. The enzyme catalyses a purine 2'-deoxy-D-ribonucleoside + phosphate = a purine nucleobase + 2-deoxy-alpha-D-ribose 1-phosphate. Functionally, catalyzes the reversible phosphorolytic breakdown of the N-glycosidic bond in the beta-(deoxy)ribonucleoside molecules, with the formation of the corresponding free purine bases and pentose-1-phosphate. In Buchnera aphidicola subsp. Schizaphis graminum (strain Sg), this protein is Purine nucleoside phosphorylase DeoD-type.